The sequence spans 697 residues: Zinc finger protein 12 (697 aa).

K3 is covalently cross-linked (Glycyl lysine isopeptide (Lys-Gly) (interchain with G-Cter in SUMO2)). The 72-residue stretch at 8–79 folds into the KRAB domain; the sequence is VSFKDVAVDF…EGEFLLQSYP (72 aa). Glycyl lysine isopeptide (Lys-Gly) (interchain with G-Cter in SUMO2) cross-links involve residues K98, K179, K182, K209, K215, K224, K239, and K267. 2 C2H2-type zinc fingers span residues 269–291 and 297–319; these read YECSECGKSFCKKSKFIIHQRTH and YECNQCGKSFCQKGTLTVHQRTH. Glycyl lysine isopeptide (Lys-Gly) (interchain with G-Cter in SUMO2) cross-links involve residues K309, K323, K337, and K365. C2H2-type zinc fingers lie at residues 325 to 347, 353 to 375, 381 to 403, 409 to 431, 437 to 459, 465 to 487, 493 to 515, and 521 to 543; these read YECNECGKNFYQKLHLIQHQRTH, YECSYCGKSFCQKTHLTQHQRTH, YVCHDCGKTFSQKSALNDHQKIH, YKCSECGKCFCRKSTLTTHLRTH, YECNECGKFFSRLSYLTVHYRTH, YECNECGKTFYLNSALMRHQRVH, YECNECGKLFSQLSYLTIHHRTH, and YECSECGKTFYQNSALCRHRRIH. Residues K544 and K547 each participate in a glycyl lysine isopeptide (Lys-Gly) (interchain with G-Cter in SUMO2) cross-link. C2H2-type zinc fingers lie at residues 549-571, 577-599, 605-627, 633-655, and 661-683; these read YECYICGKFFSQMSYLTIHHRIH, YECSECGKTFCQNSALNRHQRTH, YECYECGKCFSQMSYLTIHHRIH, FECNECGKAFSRMSYLTVHYRTH, and YECTECGKKFYHKSAFNSHQRIH.

Belongs to the krueppel C2H2-type zinc-finger protein family. As to expression, widely expressed in various adult tissues and embryonic developmental stages (isoform 3).

The protein localises to the nucleus. Functionally, transcriptional repressor which suppresses activation protein 1 (AP-1)- and serum response element (SRE)-mediated transcriptional activity. The protein is Zinc finger protein 12 (ZNF12) of Homo sapiens (Human).